A 162-amino-acid polypeptide reads, in one-letter code: MGLESEKADVQLFMDDDAYSRHSGVDFVEAEKFSASGPDRDPHRLNSHLQLGFQDVIAEPETTHSFDKVWICSHALFEISKYVLYKFLTFFLAIPLAFAAGILFAILSCLHIWIIMPFVKTCLMVLPSVQTIWKSVTDVVIAPLCTSVGRSFSSVSLQLSQD.

At 1 to 86 the chain is on the cytoplasmic side; sequence MGLESEKADV…FEISKYVLYK (86 aa). Tyr-19 carries the post-translational modification Phosphotyrosine. Residues Ser-20, Ser-23, and Ser-36 each carry the phosphoserine modification. An intramembrane region (helical) is located at residues 87–107; that stretch reads FLTFFLAIPLAFAAGILFAIL. The Cytoplasmic portion of the chain corresponds to 108 to 162; the sequence is SCLHIWIIMPFVKTCLMVLPSVQTIWKSVTDVVIAPLCTSVGRSFSSVSLQLSQD.

The protein belongs to the caveolin family. As to quaternary structure, monomer or homodimer. Interacts with CAV1; the interaction forms a stable heterooligomeric complex that is required for targeting to lipid rafts and for caveolae formation. Tyrosine phosphorylated forms do not form heterooligomers with the Tyr-19-phosphorylated form existing as a monomer or dimer. Interacts (tyrosine phosphorylated form) with the SH2 domain-containing proteins, RASA1, NCK1 and SRC. Interacts (tyrosine phosphorylated form) with INSR. Interacts (Tyr-19 phosphorylated form) with MAPK1 (phosphorylated form); the interaction, promoted by insulin, leads to nuclear location and MAPK1 activation. Interacts with STAT3; the interaction is increased on insulin-induced tyrosine phosphorylation leading to STAT activation. Post-translationally, phosphorylated on serine and tyrosine residues. CAV1 promotes phosphorylation on Ser-23 which then targets the complex to the plasma membrane, lipid rafts and caveolae. Phosphorylation on Ser-36 appears to modulate mitosis in endothelial cells. Phosphorylation on Tyr-19 is required for insulin-induced phosphorylation of MAPK1 and DNA binding of STAT3. Tyrosine phosphorylation is induced by both EGF and insulin.

The protein localises to the nucleus. The protein resides in the golgi apparatus membrane. Its subcellular location is the cell membrane. It is found in the membrane. It localises to the caveola. Functionally, may act as a scaffolding protein within caveolar membranes. Interacts directly with G-protein alpha subunits and can functionally regulate their activity. Acts as an accessory protein in conjunction with CAV1 in targeting to lipid rafts and driving caveolae formation. The Ser-36 phosphorylated form has a role in modulating mitosis in endothelial cells. Positive regulator of cellular mitogenesis of the MAPK signaling pathway. Required for the insulin-stimulated nuclear translocation and activation of MAPK1 and STAT3, and the subsequent regulation of cell cycle progression. This chain is Caveolin-2 (CAV2), found in Echinops telfairi (Lesser hedgehog tenrec).